Here is a 346-residue protein sequence, read N- to C-terminus: Protein NDL1 (346 aa).

Belongs to the NDRG family. Interacts with GB1. Interacts with the heterodimers formed by GB1 and GG1, or GB1 and GG2. Interacts with RGS1. In terms of tissue distribution, expressed in root vasculature, cotyledons, leaves, petals, mature stamens and pollen grains.

Its subcellular location is the cytoplasm. In terms of biological role, interacts with the heterotrimeric G protein beta subunit GB1 and plays an significant role in GB1-dependent regulation of lateral root formation. Involved in a signaling pathway that modulates root auxin transport and auxin gradients. Acts partially by positively regulating the auxin carrier PIN2 and AUX1. Acts, together with GB1 as positive regulator of meristem initiation and branching. GB1 and NDL1 positively regulate basipetal inflorescence auxin transport and modulate MAX2 expression in shoots, which regulates organ and lateral meristem formation by the establishment and maintenance of auxin gradients. This is Protein NDL1 from Arabidopsis thaliana (Mouse-ear cress).